Consider the following 363-residue polypeptide: 3-dehydroquinate synthase (363 aa).

NAD(+)-binding positions include 107–111, 131–132, lysine 144, and lysine 153; these read GVIGD and TT. Zn(2+)-binding residues include glutamate 186, histidine 251, and histidine 268.

It belongs to the sugar phosphate cyclases superfamily. Dehydroquinate synthase family. The cofactor is NAD(+). It depends on Co(2+) as a cofactor. Requires Zn(2+) as cofactor.

The protein localises to the cytoplasm. The enzyme catalyses 7-phospho-2-dehydro-3-deoxy-D-arabino-heptonate = 3-dehydroquinate + phosphate. It participates in metabolic intermediate biosynthesis; chorismate biosynthesis; chorismate from D-erythrose 4-phosphate and phosphoenolpyruvate: step 2/7. Functionally, catalyzes the conversion of 3-deoxy-D-arabino-heptulosonate 7-phosphate (DAHP) to dehydroquinate (DHQ). The polypeptide is 3-dehydroquinate synthase (Nostoc sp. (strain PCC 7120 / SAG 25.82 / UTEX 2576)).